A 113-amino-acid polypeptide reads, in one-letter code: U11-theraphotoxin-Hhn1a (113 aa).

Residues Met-1 to Ala-21 form the signal peptide. Positions Asp-22–Arg-74 are excised as a propeptide. The segment at Glu-61–Asp-83 is disordered. Intrachain disulfides connect Cys-75-Cys-90, Cys-82-Cys-95, and Cys-89-Cys-110.

The protein belongs to the neurotoxin 14 (magi-1) family. 01 (HNTX-16) subfamily. Expressed by the venom gland.

The protein resides in the secreted. Functionally, probable ion channel inhibitor. The polypeptide is U11-theraphotoxin-Hhn1a (Cyriopagopus hainanus (Chinese bird spider)).